The chain runs to 352 residues: Ion-translocating oxidoreductase complex subunit D (352 aa).

The next 4 membrane-spanning stretches (helical) occupy residues 20–40, 42–62, 69–91, and 123–143; these read IMLL…WFFG, GTLF…AIVL, VASH…SIPP, and PAMI…TSWL. Thr187 carries the FMN phosphoryl threonine modification. The next 5 helical transmembrane spans lie at 215–235, 242–262, 267–287, 301–321, and 322–342; these read LAGV…VFLL, WHIP…GWLF, LASP…FFIL, LIFG…GGYP, and DGVA…DYYT.

Belongs to the NqrB/RnfD family. The complex is composed of six subunits: RsxA, RsxB, RsxC, RsxD, RsxE and RsxG. The cofactor is FMN.

It localises to the cell inner membrane. Its function is as follows. Part of a membrane-bound complex that couples electron transfer with translocation of ions across the membrane. Required to maintain the reduced state of SoxR. This is Ion-translocating oxidoreductase complex subunit D from Salmonella typhi.